The chain runs to 112 residues: Large ribosomal subunit protein uL22 (112 aa).

Belongs to the universal ribosomal protein uL22 family. As to quaternary structure, part of the 50S ribosomal subunit.

Functionally, this protein binds specifically to 23S rRNA; its binding is stimulated by other ribosomal proteins, e.g. L4, L17, and L20. It is important during the early stages of 50S assembly. It makes multiple contacts with different domains of the 23S rRNA in the assembled 50S subunit and ribosome. In terms of biological role, the globular domain of the protein is located near the polypeptide exit tunnel on the outside of the subunit, while an extended beta-hairpin is found that lines the wall of the exit tunnel in the center of the 70S ribosome. The chain is Large ribosomal subunit protein uL22 from Lawsonia intracellularis (strain PHE/MN1-00).